A 112-amino-acid chain; its full sequence is Ribonuclease VapC8 (112 aa).

The 100-residue stretch at 10–109 (LLDTSVFIAR…TDALIAATAE (100 aa)) folds into the PINc domain. Residues Asp-12 and Asp-101 each contribute to the Mg(2+) site.

It belongs to the PINc/VapC protein family. It depends on Mg(2+) as a cofactor.

Toxic component of a type II toxin-antitoxin (TA) system. An RNase. The cognate antitoxin is VapB8. The protein is Ribonuclease VapC8 (vapC8) of Mycobacterium tuberculosis (strain CDC 1551 / Oshkosh).